Consider the following 848-residue polypeptide: Translation initiation factor IF-2 (848 aa).

A disordered region spans residues M1 to R265. Basic and acidic residues predominate over residues K89–A162. Positions R163 to R179 are enriched in low complexity. A compositionally biased stretch (basic and acidic residues) spans R191 to R219. Residues P346 to E514 enclose the tr-type G domain. A G1 region spans residues G355–T362. A GTP-binding site is contributed by G355–T362. The tract at residues G380–H384 is G2. A G3 region spans residues D402–G405. Residues D402 to H406 and N456 to D459 each bind GTP. The interval N456 to D459 is G4. A G5 region spans residues S492–K494.

This sequence belongs to the TRAFAC class translation factor GTPase superfamily. Classic translation factor GTPase family. IF-2 subfamily.

The protein resides in the cytoplasm. In terms of biological role, one of the essential components for the initiation of protein synthesis. Protects formylmethionyl-tRNA from spontaneous hydrolysis and promotes its binding to the 30S ribosomal subunits. Also involved in the hydrolysis of GTP during the formation of the 70S ribosomal complex. The chain is Translation initiation factor IF-2 from Paracoccus denitrificans (strain Pd 1222).